Here is an 838-residue protein sequence, read N- to C-terminus: Urease (838 aa).

The 437-residue stretch at 402–838 (GGFDTHIHFI…LPLTQDYFVY (437 aa)) folds into the Urease domain. Residues His407, His409, and Lys490 each contribute to the Ni(2+) site. Residue Lys490 is modified to N6-carboxylysine. His492 contacts substrate. The Ni(2+) site is built by His519 and His545. His593 acts as the Proton donor in catalysis. Position 633 (Asp633) interacts with Ni(2+).

The protein in the C-terminal section; belongs to the metallo-dependent hydrolases superfamily. Urease alpha subunit family. In terms of assembly, homohexamer. It depends on Ni cation as a cofactor. Post-translationally, carboxylation allows a single lysine to coordinate two nickel ions.

The enzyme catalyses urea + 2 H2O + H(+) = hydrogencarbonate + 2 NH4(+). It participates in nitrogen metabolism; urea degradation; CO(2) and NH(3) from urea (urease route): step 1/1. The polypeptide is Urease (ure1) (Aspergillus fumigatus (strain ATCC MYA-4609 / CBS 101355 / FGSC A1100 / Af293) (Neosartorya fumigata)).